Here is a 49-residue protein sequence, read N- to C-terminus: Large ribosomal subunit protein bL33B (49 aa).

Belongs to the bacterial ribosomal protein bL33 family.

This chain is Large ribosomal subunit protein bL33B, found in Bacillus licheniformis (strain ATCC 14580 / DSM 13 / JCM 2505 / CCUG 7422 / NBRC 12200 / NCIMB 9375 / NCTC 10341 / NRRL NRS-1264 / Gibson 46).